The primary structure comprises 245 residues: Thiopurine S-methyltransferase (245 aa).

Position 14 is a phosphoserine (Ser-14). 29–40 (WQDKWVNGKTAF) contacts S-adenosyl-L-methionine. Residue Phe-40 participates in substrate binding. At Lys-58 the chain carries N6-acetyllysine. S-adenosyl-L-methionine-binding positions include Leu-69, Glu-90, 134–135 (SI), and Arg-152.

Belongs to the class I-like SAM-binding methyltransferase superfamily. TPMT family. In terms of assembly, monomer.

It is found in the cytoplasm. The enzyme catalyses S-adenosyl-L-methionine + a thiopurine = S-adenosyl-L-homocysteine + a thiopurine S-methylether.. The polypeptide is Thiopurine S-methyltransferase (TPMT) (Chlorocebus aethiops (Green monkey)).